A 3262-amino-acid chain; its full sequence is MQKARGTRGEDAGTRAPPSPGVPPKRAKVGAGRGVLVTGDGAGAPVFLRPLKNAAVCAGSDVRLRVVVSGTPQPSLSWFRDGQLLPPPAPEPSCLWLRSCGAQDAGVYSCSAQNERGQASCEAVLTVLEVRDSETAEDDISDVPGTQRLELRDDRAFSTPTGGSDTLVGTSLDTPPTSVTGTSEEQVSWWGSGQTVLEQEAGSGGGTRPLPGSPRQAQTTGAGPRHLGVEPLVRASRANLVGASWGSEDSLSVASDLYGSAFSLYRGRALSIHVSIPPSGLHREEPDLQPQPASDALRPRPALPPPSKSALLPPPSPRVGKRALPGPSTQPPATPTSPHRRAQEPSLPEDITTTEEKRGKKPKSSGPSLAGTVESRPQTPLSEASGRLSALGRSPRLVRAGSRILDKLQFFEERRRSLERSDSPPAPLRPWVPLRKARSLEQPKSEGGAAWGTPEASQEELRSPRGSVAERRRLFQQKAASLDERTRQRSATSDLELRFAQELGRIRRSTSREELVRSHESLRATLQRAPSPREPGEPPLFSRPSTPKTSRAVSPAATQPPPPSGAGKSGDEPGRPRSRGPVGRTEPGEGPQQEIKRRDQFPLTRSRAIQECRSPVPPYTADPPESRTKAPSGRKREPPAQAVRFLPWATPGVEDSVLPQTLEKNRAGPEAEKRLRRGPEEDGPWGPWDRRGTRSQGKGRRARPTSPELESSDDSYVSAGEEPLEAPVFEIPLQNMVVAPGADVLLKCIITANPPPQVSWKKDGSMLHSEGRLLIRAEGERHTLLLREAQAADAGSYTATATNELGQATCASSLAVRPGGSTSPFSSPITSDEEYLSPPEEFPEPGETWPRTPTMKLSPSQDHDSSDSSSKAPPTFKVSLMDQSVREGQDVIMSIRVQGEPKPVVSWLRNRQPVRPDQRRFAEEAEGGLCRLRILAAERGDAGFYTCKAVNEYGARQCEARLEVRAHPESRSLAVLAPLQDVDVGAGEMALFECLVAGPADVEVDWLCRGRLLQPALLKCKMHFDGRKCKLLLTSVHEDDSGVYTCKLSTAKDELTCSARLTVRPSLAPLFTRLLEDVEVLEGRAARLDCKISGTPPPSVTWTHFGHPVNEGDNLRLRQDGGLHSLHIARVGSEDEGLYEVSATNTHGQAHCSAQLYVEEPRTAASGPSSKLEKMPSIPEEPEHGDLERLSIPDFLRPLQDLEVGLAKEAMLECQVTGLPYPTISWFHNGHRIQSSDDRRMTQYRDIHRLVFPAVGPQHAGVYKSVIANKLGKAACYAHLYVTDVVPGPPDGAPEVVAVTGRMVTLSWNPPRSLDMAIDPDSLTYTVQHQVLGSDQWTALVTGLREPAWAATGLKKGIQHIFRVLSSSGKSSSKPSAPSEPVQLLEHGPPLEEAPAVLDKQDIVYVVEGQPACVTVTFNHVEAQVVWRSCRGALLEARTGVYELSQPDDDQYCLRICRVSRRDLGPLTCSARNRHGTKACSVTLELAEAPRFESIMEDVEVGPGETARFAVVVEGKPLPDIMWYKDEVLLAESNHVSFVYEENECSLVLLSAGSQDGGVYTCTARNLAGEVSCKAELSVLSAQTAMEVEGVGEDEEHRGRRLSDYYDIHQEIGRGAFSYLRRVVERSSGLEFAAKFIPSQAKPKASARREARLLARLQHGCVLYFHEAFERRRGLVIVTELCTEELLERMARKPTVCESETRTYMRQVLEGICYLHQSHVLHLDVKPENLLVWDGAGGEEQVRICDFGNAQELTPGEPQYCQYGTPEFVAPEIVNQSPVSGVTDIWPVGVVAFLCLTGISPFVGENDRTTLMNIRNYNVAFEETTFLSLSREARGFLIKVLVQDRLRPTAEETLEHPWFKTEAKGAEVSTDHLKLFLSRRRWQRSQISYKCHLVLRPIPELLRAPPERVWVAMPRRQPPSGGLSSSSDSEEEELEELPSVPRPLQPEFSGSRVSLTDIPTEDEALGTPEAGAATPMDWQEQERTPSKDQEAPSPEALPSPGQESPDGPSPRRPELRRGSSAESALPRVGSREPGRSLHKAASVELPQRRSPSPGATRLTRGGLGEGEYAQRLQALRQRLLRGGPEDGKVSGLRGPLLESLGGRARDPRMARAASSEAAPHHQPPPESRGLQKSSSFSQGEAEPRGRHRRAGAPLEIPVARLGARRLQESPSLSALSETQPPSPARPSVPKLSITKSPEPSAVTSRDSPQPPEPQPVPEKVPEPKPEPVRAAKPAQPPLALQMPTQPLTPYAQIMQSLQLSSPTLSPQDPAVPPSEPKPHAAVFARVASPPPGVSEKRVPSARTPPVLAEKARVPTVPPRPGSSLSGSIENLESEAVFEAKFKRSRESPLSRGLRLLSRSRSEERGPFRGAEDDGIYRPSPAGTPLELVRRPERSRSVQDLRVAGEPGLVRRLSLSLSQKLRRTPPGQRHPAWESRSGDGESSEGGSSARASPVLAVRRRLSSTLERLSSRLQRSGSSEDSGGASGRSTPLFGRLRRATSEGESLRRLGVPHNQLGSQTGATTPSAESLGSEASGTSGSSAPGESRSRHRWGLSRLRKDKGLSQPNLSSSVQEDLGHQYVPSESDFPPVFHIKLKDQVLLEGEAATLLCLPAACPAPRISWMKDKQSLRSEPSVVIVSCKDGRQLLSIPRAGKRHAGLYECSATNVLGSITSSCTVAVARIPGKLAPPEVPQTYHDTALVVWKPGDGRAPCTYTLERRVDGESVWHPVSSGIPDCYYNVTQLPVGVTVRFRVACSNRAGQGPFSNPSEKVFIRGTPDSPAQPAAAPRDAPVTSGPTRAPPPDSPTSLAPTPALAPPASQASTLSPSTSSMSANQALSSLKAVGPPPATPPRKHRGLLATQQAEPSPPSIVVTPSEPRSFVPDTGTLTPTSSPQGVKPAPSSTSLYMVTSFVSAPPAPQAPAPEPPPEPTKVTVRSLSPAKEVVSSPTPESTTLRQGPPQKPYTFLEEKARGRFGVVRSCRENATGRTFVAKIVPYAAEGKRRVLQEYEVLRTLHHERLMSLHEAYITPRYLVLIAESCGNRELLCGLSDRFRYSEDDVATYVVQLLQGLDYLHGHHVLHLDIKPDNLLLAADNALKIVDFGSAQPYNPQALKPLGHRTGTLEFMAPEMVKGDPIGSATDIWGAGVLTYIMLSGYSPFYEPDPQETEARIVGGRFDAFQLYPNTSQSATLFLRKVLSVHPWSRPSLQDCLAHPWLQDAYLMKLRRQTLTFTTNRLKEFLGEQRRRRAEAATRHKVLLRSYPGSP.

Positions 1-33 (MQKARGTRGEDAGTRAPPSPGVPPKRAKVGAGR) are disordered. Omega-N-methylarginine is present on Arg-33. The region spanning 45–126 (PVFLRPLKNA…GQASCEAVLT (82 aa)) is the Ig-like 1 domain. Ser-141 carries the post-translational modification Phosphoserine. 4 disordered regions span residues 155–185 (RAFSTPTGGSDTLVGTSLDTPPTSVTGTSEE), 198–226 (EQEAGSGGGTRPLPGSPRQAQTTGAGPRH), 280–720 (GLHR…VSAG), and 814–875 (LAVR…APPT). Residues 158–185 (STPTGGSDTLVGTSLDTPPTSVTGTSEE) show a composition bias toward polar residues. Positions 301–317 (PALPPPSKSALLPPPSP) are enriched in pro residues. Ser-368 and Ser-375 each carry phosphoserine. The residue at position 379 (Thr-379) is a Phosphothreonine. Ser-382 and Ser-385 each carry phosphoserine. Positions 404-422 (ILDKLQFFEERRRSLERSD) are enriched in basic and acidic residues. Ser-423 is modified (phosphoserine). Residue Thr-453 is modified to Phosphothreonine. Phosphoserine is present on residues Ser-457, Ser-463, Ser-493, Ser-511, and Ser-531. The segment covering 459 to 473 (EELRSPRGSVAERRR) has biased composition (basic and acidic residues). Positions 510–522 (TSREELVRSHESL) are enriched in basic and acidic residues. The span at 543–552 (RPSTPKTSRA) shows a compositional bias: polar residues. Residue Ser-554 is modified to Phosphoserine. Basic and acidic residues-rich tracts occupy residues 624 to 638 (PESRTKAPSGRKREP) and 663 to 680 (EKNRAGPEAEKRLRRGPE). Positions 727–815 (PVFEIPLQNM…GQATCASSLA (89 aa)) constitute an Ig-like 2 domain. The span at 820–830 (GSTSPFSSPIT) shows a compositional bias: polar residues. Ig-like domains are found at residues 874–963 (PTFK…ARLE), 968–1062 (PESR…ARLT), and 1069–1157 (PLFT…AQLY). A disulfide bond links Cys-994 and Cys-1046. Phosphoserine is present on residues Ser-1133 and Ser-1177. The segment at 1162–1185 (RTAASGPSSKLEKMPSIPEEPEHG) is disordered. In terms of domain architecture, Ig-like 6 spans 1193–1283 (PDFLRPLQDL…AACYAHLYVT (91 aa)). A Fibronectin type-III 1 domain is found at 1290–1387 (PDGAPEVVAV…PSEPVQLLEH (98 aa)). Ig-like domains are found at residues 1389–1485 (PPLE…VTLE) and 1490–1578 (PRFE…AELS). Cys-1413 and Cys-1469 are disulfide-bonded. In terms of domain architecture, Protein kinase 1 spans 1606-1859 (YDIHQEIGRG…AEETLEHPWF (254 aa)). ATP-binding positions include 1612–1620 (IGRGAFSYL) and Lys-1635. The active-site Proton acceptor is Asp-1724. The tract at residues 1913–2571 (MPRRQPPSGG…SQPNLSSSVQ (659 aa)) is disordered. Residues 1918–1927 (PPSGGLSSSS) show a composition bias toward low complexity. Residues 1980 to 1990 (EQERTPSKDQE) are compositionally biased toward basic and acidic residues. A phosphoserine mark is found at Ser-1993, Ser-2004, Ser-2019, Ser-2020, and Ser-2042. The segment covering 2009 to 2019 (SPRRPELRRGS) has biased composition (basic and acidic residues). At Arg-2060 the chain carries Asymmetric dimethylarginine; alternate. Arg-2060 bears the Omega-N-methylarginine; alternate mark. Residues 2069–2081 (AQRLQALRQRLLR) are compositionally biased toward low complexity. 2 positions are modified to phosphoserine: Ser-2114 and Ser-2135. At Arg-2144 the chain carries Omega-N-methylarginine. Residues 2168-2179 (ESPSLSALSETQ) are compositionally biased toward polar residues. Residues Ser-2182 and Ser-2207 each carry the phosphoserine modification. A compositionally biased stretch (polar residues) spans 2193 to 2207 (ITKSPEPSAVTSRDS). Residues 2208–2218 (PQPPEPQPVPE) show a composition bias toward pro residues. A compositionally biased stretch (basic and acidic residues) spans 2219–2229 (KVPEPKPEPVR). Positions 2230–2268 (AAKPAQPPLALQMPTQPLTPYAQIMQSLQLSSPTLSPQD) are enriched in low complexity. Basic and acidic residues predominate over residues 2337–2348 (FEAKFKRSRESP). Positions 2349 to 2358 (LSRGLRLLSR) are enriched in low complexity. The segment covering 2359–2375 (SRSEERGPFRGAEDDGI) has biased composition (basic and acidic residues). At Ser-2379 the chain carries Phosphoserine. At Thr-2383 the chain carries Phosphothreonine. Over residues 2387–2398 (LVRRPERSRSVQ) the composition is skewed to basic and acidic residues. 6 positions are modified to phosphoserine: Ser-2413, Ser-2417, Ser-2441, Ser-2442, Ser-2447, and Ser-2451. A compositionally biased stretch (low complexity) spans 2461-2487 (SSTLERLSSRLQRSGSSEDSGGASGRS). Polar residues predominate over residues 2513–2523 (QLGSQTGATTP). Residues Ser-2524 and Ser-2527 each carry the phosphoserine modification. Positions 2524 to 2543 (SAESLGSEASGTSGSSAPGE) are enriched in low complexity. Basic residues predominate over residues 2546–2557 (SRHRWGLSRLRK). Ser-2562 bears the Phosphoserine mark. Residues 2562–2571 (SQPNLSSSVQ) show a composition bias toward polar residues. One can recognise an Ig-like 9 domain in the interval 2586 to 2676 (PPVFHIKLKD…GSITSSCTVA (91 aa)). A disulfide bridge links Cys-2608 with Cys-2660. In terms of domain architecture, Fibronectin type-III 2 spans 2683-2777 (KLAPPEVPQT…KVFIRGTPDS (95 aa)). Disordered regions lie at residues 2756-2832 (RAGQ…MSAN), 2857-2899 (ATQQ…PAPS), and 2912-2960 (APPA…PQKP). At Thr-2774 the chain carries Phosphothreonine. 2 stretches are compositionally biased toward low complexity: residues 2775-2789 (PDSPAQPAAAPRDAP) and 2803-2831 (PTSLAPTPALAPPASQASTLSPSTSSMSA). Ser-2777 bears the Phosphoserine mark. The Fibronectin type-III 3 domain occupies 2865 to 2968 (PPSIVVTPSE…KPYTFLEEKA (104 aa)). Positions 2883–2899 (GTLTPTSSPQGVKPAPS) are enriched in polar residues. Positions 2913–2927 (PPAPQAPAPEPPPEP) are enriched in pro residues. The span at 2943 to 2953 (SSPTPESTTLR) shows a compositional bias: polar residues. At Ser-2944 the chain carries Phosphoserine. Positions 2946–3213 (TPESTTLRQG…LQDCLAHPWL (268 aa)) constitute a Protein kinase 2 domain. Asp-3080 functions as the Proton acceptor in the catalytic mechanism.

The protein belongs to the protein kinase superfamily. CAMK Ser/Thr protein kinase family. Interacts with MTM1. Isoform 3 is found as a monomer or homodimer. Post-translationally, may be autophosphorylated. Isoform 1 is preferentially expressed in striated muscle. Non-kinase form such as isoform 3 is predominantly expressed in the aorta. Isoform 3 appears to be expressed only in highly differentiated ASMC in normal vessel walls and down-regulated in dedifferentiated ASMC in vivo. In response to vascular injuries ASMC dedifferentiate and change from a quiescent and contractile phenotype to a proliferative and synthetic phenotype. This proliferation of vascular smooth muscle cells is one of the most prominent features of atherosclerosis. Isoform 1 and isoform 4 are expressed in cardiomyocytes of the developing heart.

The protein localises to the nucleus. It carries out the reaction L-seryl-[protein] + ATP = O-phospho-L-seryl-[protein] + ADP + H(+). The enzyme catalyses L-threonyl-[protein] + ATP = O-phospho-L-threonyl-[protein] + ADP + H(+). Functionally, isoform 3 may have a role in regulating the growth and differentiation of arterial smooth muscle cells. The sequence is that of Striated muscle-specific serine/threonine-protein kinase (Speg) from Mus musculus (Mouse).